Reading from the N-terminus, the 277-residue chain is Probable endonuclease LCL3 (277 aa).

The chain crosses the membrane as a helical span at residues 39-56; sequence WIAPIIAAGATMGFWSFY. A TNase-like domain is found at 77–239; the sequence is RSLFGKVTSV…RQKGKGMWSL (163 aa). The active site involves Arg-126. Position 131 (Asp-131) interacts with Ca(2+). Residues Glu-134 and Arg-174 contribute to the active site.

The protein belongs to the LCL3 family.

The protein localises to the mitochondrion. It is found in the membrane. The polypeptide is Probable endonuclease LCL3 (LCL3) (Podospora anserina (strain S / ATCC MYA-4624 / DSM 980 / FGSC 10383) (Pleurage anserina)).